Here is a 76-residue protein sequence, read N- to C-terminus: Heat shock factor-binding protein 1 (76 aa).

Belongs to the HSBP1 family. Homohexamer. Associates with heptad repeats of HSF1 trimers and probably also HSF1 monomers, and with HSP70. Association with HSF1 trimers and HSP70 coincides with attenuation of heat shock response and the conversion of HSF1 trimer to monomer.

It localises to the nucleus. Functionally, negative regulator of the heat shock response. Negatively affects HSF1 DNA-binding activity. May have a role in the suppression of the activation of the stress response during the aging process. The polypeptide is Heat shock factor-binding protein 1 (HSBP1) (Bos taurus (Bovine)).